The following is a 225-amino-acid chain: Membrane protein (225 aa).

Over 1 to 20 the chain is Virion surface; the sequence is MSNETNCTLDFEQSVELFKE. A helical membrane pass occupies residues 21–41; the sequence is YNLFITAFLLFLTIILQYGYA. Over 42-51 the chain is Intravirion; that stretch reads TRSKFIYILK. Residues 52–72 traverse the membrane as a helical segment; sequence MIVLWCFWPLNIAVGVISCIY. Residues 73–77 lie on the Virion surface side of the membrane; that stretch reads PPNTG. Residues 78-98 traverse the membrane as a helical segment; that stretch reads GLVAAIILTVFACLSFVGYWI. Residues 99–225 are Intravirion-facing; the sequence is QSIRLFKRCR…VATGGSSLYT (127 aa).

This sequence belongs to the gammacoronaviruses M protein family. Homomultimer. Interacts with envelope E protein in the budding compartment of the host cell, which is located between endoplasmic reticulum and the Golgi complex. Forms a complex with HE and S proteins. Interacts with nucleocapsid N protein. This interaction probably participates in RNA packaging into the virus.

Its subcellular location is the virion membrane. The protein resides in the host Golgi apparatus membrane. Its function is as follows. Component of the viral envelope that plays a central role in virus morphogenesis and assembly via its interactions with other viral proteins. The sequence is that of Membrane protein from Gallus gallus (Chicken).